The chain runs to 177 residues: ATP synthase subunit delta (177 aa).

It belongs to the ATPase delta chain family. In terms of assembly, F-type ATPases have 2 components, F(1) - the catalytic core - and F(0) - the membrane proton channel. F(1) has five subunits: alpha(3), beta(3), gamma(1), delta(1), epsilon(1). F(0) has three main subunits: a(1), b(2) and c(10-14). The alpha and beta chains form an alternating ring which encloses part of the gamma chain. F(1) is attached to F(0) by a central stalk formed by the gamma and epsilon chains, while a peripheral stalk is formed by the delta and b chains.

The protein resides in the cell inner membrane. Its function is as follows. F(1)F(0) ATP synthase produces ATP from ADP in the presence of a proton or sodium gradient. F-type ATPases consist of two structural domains, F(1) containing the extramembraneous catalytic core and F(0) containing the membrane proton channel, linked together by a central stalk and a peripheral stalk. During catalysis, ATP synthesis in the catalytic domain of F(1) is coupled via a rotary mechanism of the central stalk subunits to proton translocation. This protein is part of the stalk that links CF(0) to CF(1). It either transmits conformational changes from CF(0) to CF(1) or is implicated in proton conduction. The polypeptide is ATP synthase subunit delta (Neisseria meningitidis serogroup A / serotype 4A (strain DSM 15465 / Z2491)).